The sequence spans 411 residues: 2,3-bisphosphoglycerate-independent phosphoglycerate mutase (411 aa).

Belongs to the BPG-independent phosphoglycerate mutase family. A-PGAM subfamily.

The catalysed reaction is (2R)-2-phosphoglycerate = (2R)-3-phosphoglycerate. It functions in the pathway carbohydrate degradation; glycolysis; pyruvate from D-glyceraldehyde 3-phosphate: step 3/5. Its function is as follows. Catalyzes the interconversion of 2-phosphoglycerate and 3-phosphoglycerate. This chain is 2,3-bisphosphoglycerate-independent phosphoglycerate mutase, found in Pyrobaculum calidifontis (strain DSM 21063 / JCM 11548 / VA1).